The primary structure comprises 250 residues: Myelin basic protein (250 aa).

The span at 1 to 28 (MGNHSGKRELSAEKASKDGEIHRGEAGK) shows a compositional bias: basic and acidic residues. The tract at residues 1-150 (MGNHSGKREL…SQRSKYLATA (150 aa)) is disordered. N-acetylalanine is present on Gly-2. Residues Ser-31 and Ser-40 each carry the phosphoserine modification. Over residues 95–113 (FSRDAPGREDNTFKDRPSE) the composition is skewed to basic and acidic residues. A Phosphothreonine modification is found at Ser-96. Glu-113 carries the post-translational modification Phosphoserine. Glu-122 carries the post-translational modification Phosphothreonine. Thr-125 is subject to Phosphotyrosine. Phosphoserine is present on residues Ala-135, Arg-139, Ser-141, and Ser-144. Residues Tyr-146 and Leu-147 each carry the phosphotyrosine modification. Thr-149 carries the phosphothreonine modification. At Ser-151 the chain carries Phosphoserine. Ser-151 is modified (phosphotyrosine). Residue Thr-152 is modified to Phosphothreonine. Citrulline occurs at positions 157 and 163. Thr-167 is modified (phosphothreonine). Position 172 is a phosphoserine (Ser-172). An omega-N-methylarginine mark is found at Arg-175 and Arg-181. The tract at residues 175–250 (RFFSGDRGAP…SRSGSPMARR (76 aa)) is disordered. Ser-188 is modified (phosphoserine). At Thr-197 the chain carries Phosphothreonine. Residues 197–206 (THYGSLPQKS) show a composition bias toward polar residues. A Phosphotyrosine modification is found at Tyr-199. Ser-206 is subject to Phosphoserine. 3 positions are modified to phosphothreonine: Thr-211, Thr-226, and Thr-229. Gln-234 is subject to Deamidated glutamine. Arg-239 is subject to Citrulline. Ser-241 bears the Phosphoserine mark. Ser-245 carries the post-translational modification Phosphoserine; by UHMK1. At Arg-250 the chain carries Citrulline.

The protein belongs to the myelin basic protein family. Homodimer. As in other animals, several charge isomers may be produced as a result of optional post-translational modifications, such as phosphorylation of serine or threonine residues, deamidation of glutamine or asparagine residues, citrullination and methylation of arginine residues. In terms of processing, methylated on arginine residues; decreases with the age of the animal, making MBP more cationic. Post-translationally, phosphorylated by TAOK2, VRK2, MAPK11, MAPK12, MAPK14 and MINK1. Proteolytically cleaved in B cell lysosomes by cathepsin CTSG which degrades the major immunogenic MBP epitope and prevents the activation of MBP-specific autoreactive T cells. In the embryo, isoform 1-isoform 3 are found in neurons within the central nervous system (primarily in pioneer neurons important in the formation of the cortex) and the peripheral nervous system. They are also expressed in the thymus, gut, lung and kidney. In the adult, isoform 1-isoform 3 are highly expressed in the brain (mainly in brain regions rich in oligodendrocytes) and spleen. Lower levels are seen in the heart, kidney and lung. Isoform 2 is also found in cells of the immune system. The isoforms missing the 134 first amino acids (isoform 4-isoform 13) are almost exclusively produced in the myelin-forming cells, the mature oligodendrocytes.

It localises to the myelin membrane. The protein resides in the cytoplasm. The protein localises to the nucleus. In terms of biological role, the classic group of MBP isoforms (isoform 4-isoform 13) are with PLP the most abundant protein components of the myelin membrane in the CNS. They have a role in both its formation and stabilization. The non-classic group of MBP isoforms (isoform 1-isoform 3/Golli-MBPs) may preferentially have a role in the early developing brain long before myelination, maybe as components of transcriptional complexes, and may also be involved in signaling pathways in T-cells and neural cells. Differential splicing events combined to optional post-translational modifications give a wide spectrum of isomers, with each of them potentially having a specialized function. The protein is Myelin basic protein (Mbp) of Mus musculus (Mouse).